A 424-amino-acid chain; its full sequence is MGVTIVLGSQWGDEGKGKITDMLAQQATLCCRAAGGHNAGHTIVHGDKTYDFHILPSGLVSPSCVNLIGAGTVVHVPSFFKELASLEDKGLEGAGKRIFISDRAHVCFDLHSVVDGLEEAKLGGRKVGTTGKGIGPCYSDKAARRGVRVGEILDEALFERKLRSLDAGYRARFGELEYNVEEELARFKEYRKRLGPYIVDQLAFLQKYKDAPNTLVEGANALMLDLDHGTYPFVTSSSTGLGGAVQALSLNPTSISSIIGVVKAYTTRVGSGPFPSEQLNDAGDKLQGVGKEFGVTTGRRRRCGWFDMVLCRYSQAINHYTALNLTKLDVLDDFDEIKVGVAYILPDGTRTENTMPADPEVLEKVQVEYVTLPGWKSNTMGVKKYEDLPANARAYIEYIERGLGGVPVKWIGTGPARDHMICRE.

GTP contacts are provided by residues 12–18 and 40–42; these read GDEGKGK and GHT. Catalysis depends on Asp13, which acts as the Proton acceptor. Residues Asp13 and Gly40 each contribute to the Mg(2+) site. IMP contacts are provided by residues 13–16, 38–41, Thr130, Arg144, Asn220, Thr235, and Arg299; these read DEGK and NAGH. Catalysis depends on His41, which acts as the Proton donor. Substrate is bound at residue 295-301; it reads VTTGRRR. Residues Arg301, 327 to 329, and 412 to 414 contribute to the GTP site; these read KLD and GTG.

Belongs to the adenylosuccinate synthetase family. In terms of assembly, homodimer. The cofactor is Mg(2+).

The protein localises to the cytoplasm. The enzyme catalyses IMP + L-aspartate + GTP = N(6)-(1,2-dicarboxyethyl)-AMP + GDP + phosphate + 2 H(+). Its pathway is purine metabolism; AMP biosynthesis via de novo pathway; AMP from IMP: step 1/2. In terms of biological role, plays an important role in the de novo pathway and in the salvage pathway of purine nucleotide biosynthesis. Catalyzes the first committed step in the biosynthesis of AMP from IMP. The polypeptide is Adenylosuccinate synthetase (Aspergillus niger (strain ATCC MYA-4892 / CBS 513.88 / FGSC A1513)).